The sequence spans 122 residues: MKLLTSLVFCSLLLGVCHGGFFSFVHEAFQGAGDMWRAYTDMKEANWKNSDKYFHARGNYDAAQRGPGGVWAAEKISDGREAFQEFFGRGHEDTIADQEANRHGRSGKDPNYYRPPGLPDKY.

The N-terminal stretch at 1 to 19 is a signal peptide; sequence MKLLTSLVFCSLLLGVCHG. The tract at residues 20 to 45 is important for amyloid formation; that stretch reads GFFSFVHEAFQGAGDMWRAYTDMKEA. Over residues 91 to 108 the composition is skewed to basic and acidic residues; the sequence is HEDTIADQEANRHGRSGK. The disordered stretch occupies residues 91-122; that stretch reads HEDTIADQEANRHGRSGKDPNYYRPPGLPDKY.

The protein belongs to the SAA family. As to quaternary structure, homohexamer; dimer of trimers. Can form amyloid fibrils after partial proteolysis; the native, undenatured protein does not form amyloid fibrils (in vitro). Apolipoprotein of the HDL complex. Binds to heparin. As to expression, detected in blood plasma (at protein level). Detected in liver.

It localises to the secreted. Major acute phase protein. The chain is Serum amyloid A-1 protein (Saa1) from Mus musculus (Mouse).